We begin with the raw amino-acid sequence, 225 residues long: PKHD-type hydroxylase Smal_0990 (225 aa).

The 100-residue stretch at 78 to 177 (KYLPPRFNRY…RVASFFWVQS (100 aa)) folds into the Fe2OG dioxygenase domain. Fe cation contacts are provided by histidine 96, aspartate 98, and histidine 158. Arginine 168 lines the 2-oxoglutarate pocket.

Requires Fe(2+) as cofactor. L-ascorbate is required as a cofactor.

This is PKHD-type hydroxylase Smal_0990 from Stenotrophomonas maltophilia (strain R551-3).